The following is a 177-amino-acid chain: Large ribosomal subunit protein uL6 (177 aa).

This sequence belongs to the universal ribosomal protein uL6 family. In terms of assembly, part of the 50S ribosomal subunit.

Functionally, this protein binds to the 23S rRNA, and is important in its secondary structure. It is located near the subunit interface in the base of the L7/L12 stalk, and near the tRNA binding site of the peptidyltransferase center. This chain is Large ribosomal subunit protein uL6, found in Rhizobium etli (strain ATCC 51251 / DSM 11541 / JCM 21823 / NBRC 15573 / CFN 42).